Here is a 243-residue protein sequence, read N- to C-terminus: UPF0758 protein SYNPCC7002_A0220 (243 aa).

One can recognise an MPN domain in the interval 112 to 235 (IIVDSPEAAA…FGSLRQKTAL (124 aa)). Histidine 184, histidine 186, and aspartate 197 together coordinate Zn(2+). The JAMM motif motif lies at 184–197 (HNHPSGNVDPSPED).

The protein belongs to the UPF0758 family.

This is UPF0758 protein SYNPCC7002_A0220 from Picosynechococcus sp. (strain ATCC 27264 / PCC 7002 / PR-6) (Agmenellum quadruplicatum).